The following is a 776-amino-acid chain: Probable inorganic carbon transporter subunit DabA (776 aa).

Zn(2+) is bound by residues Cys313, Asp315, His473, and Cys488.

This sequence belongs to the inorganic carbon transporter (TC 9.A.2) DabA family. As to quaternary structure, forms a complex with DabB. It depends on Zn(2+) as a cofactor.

It localises to the cell inner membrane. Part of an energy-coupled inorganic carbon pump. The sequence is that of Probable inorganic carbon transporter subunit DabA from Chromobacterium violaceum (strain ATCC 12472 / DSM 30191 / JCM 1249 / CCUG 213 / NBRC 12614 / NCIMB 9131 / NCTC 9757 / MK).